We begin with the raw amino-acid sequence, 83 residues long: Acyl carrier protein (83 aa).

Residues 2-77 (STIEEKVKTI…AAIDFISNSH (76 aa)) enclose the Carrier domain. Residue Ser-37 is modified to O-(pantetheine 4'-phosphoryl)serine.

The protein belongs to the acyl carrier protein (ACP) family. In terms of processing, 4'-phosphopantetheine is transferred from CoA to a specific serine of apo-ACP by AcpS. This modification is essential for activity because fatty acids are bound in thioester linkage to the sulfhydryl of the prosthetic group.

It localises to the cytoplasm. Its pathway is lipid metabolism; fatty acid biosynthesis. Its function is as follows. Carrier of the growing fatty acid chain in fatty acid biosynthesis. The sequence is that of Acyl carrier protein from Blochmanniella pennsylvanica (strain BPEN).